Reading from the N-terminus, the 255-residue chain is tRNA (guanine-N(7)-)-methyltransferase (255 aa).

Positions 1–35 are disordered; sequence MTRTNDASGGGKLPRKRFYRARAHSNPLSDSHFPV. Over residues 13–23 the composition is skewed to basic residues; sequence LPRKRFYRARA. S-adenosyl-L-methionine is bound by residues Gly-75, 98–99, 131–132, and Leu-151; these read EL and NS. Asp-154 is an active-site residue. 229–231 is an S-adenosyl-L-methionine binding site; sequence TEE.

This sequence belongs to the class I-like SAM-binding methyltransferase superfamily. TrmB family.

Its subcellular location is the nucleus. It catalyses the reaction guanosine(46) in tRNA + S-adenosyl-L-methionine = N(7)-methylguanosine(46) in tRNA + S-adenosyl-L-homocysteine. Its pathway is tRNA modification; N(7)-methylguanine-tRNA biosynthesis. Its function is as follows. Catalyzes the formation of N(7)-methylguanine at position 46 (m7G46) in tRNA. The chain is tRNA (guanine-N(7)-)-methyltransferase from Zea mays (Maize).